Reading from the N-terminus, the 427-residue chain is UPF0229 protein YeaH (427 aa).

The span at 79-90 shows a compositional bias: basic and acidic residues; that stretch reads NDHFVQNDRIER. Residues 79–110 form a disordered region; the sequence is NDHFVQNDRIERPQGGGGGSGSGQGQASQDGE. Positions 92–102 are enriched in gly residues; that stretch reads QGGGGGSGSGQ.

Belongs to the UPF0229 family.

This chain is UPF0229 protein YeaH, found in Escherichia coli O139:H28 (strain E24377A / ETEC).